The following is an 868-amino-acid chain: MHEQYQPREIEAAAQSFWDEQKSFEVSEQPGKETYYCLSMFPYPSGKLHMGHVRNYTIGDVISRYQRMLGKNVLQPMGWDAFGMPAENAAMKNNVAPAKWTYENIAYMKSQLRSLGLAVDWSREVTTCKPDYYRWEQWLFTRLFEKGVIYRKNGTVNWDPIDQTVLANEQVIDGRGWRSGALIEKREIPMYYFKITAYADELLESLDELTGWPEQVKTMQRNWIGKSRGMEVQFPYNVDSIGESGTLKVFTTRPDTLMGATYVAVAAEHHLAALAAKNNPELQAFIAECKGGSVAEADVATQEKKGLPTGLFVEHPLTGEKLPVWVANYVLMHYGDGAVMAVPAHDERDFEFAHKYNLPVKSVVRTSSGDTNPAPWQDAYGEHGTLINSGEFDGLDFAGAFDAMEVALIKKNLGASRTQFRLRDWGISRQRYWGCPIPIIHCDACGDVPVPEDQLPVVLPEDVVPDGAGSPLARMPEFYECTCPKCGQPAKRETDTMDTFVESSWYYARYASPHFEGGLVEKSAADHWLPVDQYIGGIEHAILHLLYARFFHKLMRDEGLVSSNEPFKNLLTQGMVVAETYYRREANGAYTWFNPADVELERDSKAKVISAKLIADGLPVEIGGTEKMAKSKNNGVDPQSMIDQFGADTCRLFMMFASPPDMSAEWSDSGVEGSHRFLKRVWRLAQAHITQGLPGKLDIASLNDEQKVIRRAIHQAIKQASHDVGQNHKFNTAIAQVMTLMNVLEKAAQATEQDRALVQEGLETVTLLLAPITPHISHELWNRLGHADPVIDASWPVLDESALVQDSLTLVIQVNGKLRGQIEMPAAATREEVEAAARANENVLRFVDGLTIRKVIVVPGKLVNIVAS.

Residues 42-52 carry the 'HIGH' region motif; the sequence is PYPSGKLHMGH. The short motif at 627–631 is the 'KMSKS' region element; that stretch reads KMAKS. K630 is an ATP binding site.

Belongs to the class-I aminoacyl-tRNA synthetase family.

The protein resides in the cytoplasm. The catalysed reaction is tRNA(Leu) + L-leucine + ATP = L-leucyl-tRNA(Leu) + AMP + diphosphate. The sequence is that of Leucine--tRNA ligase from Pseudomonas fluorescens (strain Pf0-1).